Here is a 361-residue protein sequence, read N- to C-terminus: Glyceraldehyde-3-phosphate dehydrogenase, glycosomal (361 aa).

Residues 13-14 (RI), Asp39, Gln92, and Ser135 each bind NAD(+). D-glyceraldehyde 3-phosphate is bound by residues 166–168 (SCT), Thr198, 227–228 (TG), and Arg250. The Nucleophile role is filled by Cys167. Asn336 serves as a coordination point for NAD(+). The Microbody targeting signal motif lies at 359–361 (SKM).

The protein belongs to the glyceraldehyde-3-phosphate dehydrogenase family. As to quaternary structure, homotetramer.

The protein resides in the glycosome. It catalyses the reaction D-glyceraldehyde 3-phosphate + phosphate + NAD(+) = (2R)-3-phospho-glyceroyl phosphate + NADH + H(+). It functions in the pathway carbohydrate degradation; glycolysis; pyruvate from D-glyceraldehyde 3-phosphate: step 1/5. The sequence is that of Glyceraldehyde-3-phosphate dehydrogenase, glycosomal (GAPG) from Leishmania mexicana.